The primary structure comprises 134 residues: Small ribosomal subunit protein uS11 (134 aa).

The tract at residues 1–21 (MPPKSRQGAGRKVRRKEKKNV) is disordered. A compositionally biased stretch (basic residues) spans 9–21 (AGRKVRRKEKKNV).

The protein belongs to the universal ribosomal protein uS11 family. In terms of assembly, part of the 30S ribosomal subunit. Interacts with proteins S7 and S18. Binds to IF-3.

Functionally, located on the platform of the 30S subunit, it bridges several disparate RNA helices of the 16S rRNA. Forms part of the Shine-Dalgarno cleft in the 70S ribosome. In Thermobifida fusca (strain YX), this protein is Small ribosomal subunit protein uS11.